We begin with the raw amino-acid sequence, 259 residues long: MLSKRIIPCLDVRAGKTTKGIKFQNNVEIGDPVEMAKFYYEAGADELVFYDITASHEQRGIMIDVVKKVAETIFIPFSVGGGISTLEGMRAVLLAGAEKVSVNSAAVKNPDIIRQGSRAFGNQCVVLGMDVKHVGEKPGIASGYEIVINGGRSYTGMDAIAWALKAQDLGAGEICLNSIDADGTKDGYEINLTRLVSDAVDIPVIASGGAGTPAHLAHVLDQGRADAALIASMVHFGTYTVNQIKGYLHDHGVKVRKTW.

Active-site residues include Asp11 and Asp130.

This sequence belongs to the HisA/HisF family. In terms of assembly, heterodimer of HisH and HisF.

Its subcellular location is the cytoplasm. It catalyses the reaction 5-[(5-phospho-1-deoxy-D-ribulos-1-ylimino)methylamino]-1-(5-phospho-beta-D-ribosyl)imidazole-4-carboxamide + L-glutamine = D-erythro-1-(imidazol-4-yl)glycerol 3-phosphate + 5-amino-1-(5-phospho-beta-D-ribosyl)imidazole-4-carboxamide + L-glutamate + H(+). It functions in the pathway amino-acid biosynthesis; L-histidine biosynthesis; L-histidine from 5-phospho-alpha-D-ribose 1-diphosphate: step 5/9. IGPS catalyzes the conversion of PRFAR and glutamine to IGP, AICAR and glutamate. The HisF subunit catalyzes the cyclization activity that produces IGP and AICAR from PRFAR using the ammonia provided by the HisH subunit. The protein is Imidazole glycerol phosphate synthase subunit HisF of Desulforapulum autotrophicum (strain ATCC 43914 / DSM 3382 / VKM B-1955 / HRM2) (Desulfobacterium autotrophicum).